A 77-amino-acid chain; its full sequence is U8-lycotoxin-Ls1l (77 aa).

An N-terminal signal peptide occupies residues methionine 1 to alanine 20. Positions glutamine 21–lysine 26 are excised as a propeptide.

It belongs to the neurotoxin 19 (CSTX) family. 08 (U8-Lctx) subfamily. Contains 4 disulfide bonds. As to expression, expressed by the venom gland.

It localises to the secreted. This is U8-lycotoxin-Ls1l from Lycosa singoriensis (Wolf spider).